Here is a 407-residue protein sequence, read N- to C-terminus: Putative membrane protein 047R (407 aa).

Residues I265 to I337 form a disordered region. Over residues P271 to I337 the composition is skewed to pro residues. The next 2 membrane-spanning stretches (helical) occupy residues N355–P372 and N385–V403.

It belongs to the IIV-6 337L family.

It is found in the virion membrane. This chain is Putative membrane protein 047R, found in Aedes vexans (Inland floodwater mosquito).